Here is a 74-residue protein sequence, read N- to C-terminus: Sec-independent protein translocase protein TatA (74 aa).

The helical transmembrane segment at 1–21 (MGGISIWNLVIIVLLVVLLFG) threads the bilayer. The tract at residues 51–74 (AEFEKVEQKTAESTEQKAKEKEQA) is disordered.

It belongs to the TatA/E family. In terms of assembly, the Tat system comprises two distinct complexes: a TatABC complex, containing multiple copies of TatA, TatB and TatC subunits, and a separate TatA complex, containing only TatA subunits. Substrates initially bind to the TatABC complex, which probably triggers association of the separate TatA complex to form the active translocon.

It is found in the cell inner membrane. Part of the twin-arginine translocation (Tat) system that transports large folded proteins containing a characteristic twin-arginine motif in their signal peptide across membranes. TatA could form the protein-conducting channel of the Tat system. The chain is Sec-independent protein translocase protein TatA from Glaesserella parasuis serovar 5 (strain SH0165) (Haemophilus parasuis).